A 145-amino-acid polypeptide reads, in one-letter code: Histone H2B.1, sperm (145 aa).

The segment at 1-52 (MPSQKSPTKRSPTKRSPTKRSPQKGGKGGKGAKRGGKAGKRRRGVQVKRRRR) is disordered. Short sequence motifs (SPKK motif) lie at residues 6–9 (SPTK), 11–14 (SPTK), 16–19 (SPTK), and 21–24 (SPQK). 2 stretches are compositionally biased toward basic residues: residues 7–22 (PTKRSPTKRSPTKRSP) and 30–52 (KGAKRGGKAGKRRRGVQVKRRRR). Phosphoserine occurs at positions 16 and 21. O-linked (GlcNAc) serine glycosylation occurs at serine 132. A Glycyl lysine isopeptide (Lys-Gly) (interchain with G-Cter in ubiquitin) cross-link involves residue lysine 140.

It belongs to the histone H2B family. In terms of assembly, the nucleosome is a histone octamer containing two molecules each of H2A, H2B, H3 and H4 assembled in one H3-H4 heterotetramer and two H2A-H2B heterodimers. The octamer wraps approximately 147 bp of DNA. In terms of processing, monoubiquitination of Lys-140 gives a specific tag for epigenetic transcriptional activation and is also prerequisite for histone H3 'Lys-4' and 'Lys-79' methylation. Phosphorylated on SPKK motifs 3 and 4; which may regulate DNA binding. Dephosphorylated during maturation of spermatids to mature sperm and rephosphorylated at fertilization. Post-translationally, glcNAcylation at Ser-132 promotes monoubiquitination of Lys-140. It fluctuates in response to extracellular glucose, and associates with transcribed genes.

Its subcellular location is the nucleus. The protein localises to the chromosome. Core component of nucleosome. Nucleosomes wrap and compact DNA into chromatin, limiting DNA accessibility to the cellular machineries which require DNA as a template. Histones thereby play a central role in transcription regulation, DNA repair, DNA replication and chromosomal stability. DNA accessibility is regulated via a complex set of post-translational modifications of histones, also called histone code, and nucleosome remodeling. In Parechinus angulosus (Angulate sea urchin), this protein is Histone H2B.1, sperm.